We begin with the raw amino-acid sequence, 512 residues long: Hyaluronidase PH-20 (512 aa).

The signal sequence occupies residues 1 to 35; the sequence is MGELQFKWLFWRSFAESGGTFQTVLIFLFIPYSLT. Disulfide bonds link Cys60–Cys351 and Cys223–Cys237. Asn63 carries N-linked (GlcNAc...) asparagine glycosylation. Glu147 acts as the Proton donor in catalysis. 2 N-linked (GlcNAc...) asparagine glycosylation sites follow: Asn165 and Asn179. Asn368 carries an N-linked (GlcNAc...) asparagine glycan. Intrachain disulfides connect Cys376–Cys387, Cys381–Cys435, and Cys437–Cys464. Asn408 carries N-linked (GlcNAc...) asparagine glycosylation.

This sequence belongs to the glycosyl hydrolase 56 family.

The protein localises to the cell membrane. It carries out the reaction Random hydrolysis of (1-&gt;4)-linkages between N-acetyl-beta-D-glucosamine and D-glucuronate residues in hyaluronate.. Its function is as follows. Involved in sperm-egg adhesion. Upon fertilization sperm must first penetrate a layer of cumulus cells that surrounds the egg before reaching the zona pellucida. The cumulus cells are embedded in a matrix containing hyaluronic acid which is formed prior to ovulation. This protein aids in penetrating the layer of cumulus cells by digesting hyaluronic acid. In Rattus norvegicus (Rat), this protein is Hyaluronidase PH-20 (Spam1).